Here is a 917-residue protein sequence, read N- to C-terminus: Protein translocase subunit SecA 1 (917 aa).

Residues Q87, 105-109 (GEGKT), and D507 contribute to the ATP site. The tract at residues 866 to 917 (EKSPESIGEDIEGREHPQKHQPFVRQGEKIGRNDPCPCGSGKKYKQCHGKLN) is disordered. Zn(2+) contacts are provided by C901, C903, C912, and H913. Positions 907–917 (KKYKQCHGKLN) are enriched in basic residues.

The protein belongs to the SecA family. In terms of assembly, monomer and homodimer. Part of the essential Sec protein translocation apparatus which comprises SecA, SecYEG and auxiliary proteins SecDF-YajC and YidC. Zn(2+) serves as cofactor.

The protein localises to the cell inner membrane. The protein resides in the cytoplasm. The catalysed reaction is ATP + H2O + cellular proteinSide 1 = ADP + phosphate + cellular proteinSide 2.. Part of the Sec protein translocase complex. Interacts with the SecYEG preprotein conducting channel. Has a central role in coupling the hydrolysis of ATP to the transfer of proteins into and across the cell membrane, serving both as a receptor for the preprotein-SecB complex and as an ATP-driven molecular motor driving the stepwise translocation of polypeptide chains across the membrane. The polypeptide is Protein translocase subunit SecA 1 (Nitrosospira multiformis (strain ATCC 25196 / NCIMB 11849 / C 71)).